The primary structure comprises 432 residues: 2-oxoglutarate-dependent dioxygenase AOP2 (432 aa).

In terms of domain architecture, Fe2OG dioxygenase spans 281–378; the sequence is SGDDVEANDD…RYTAAIFTCP (98 aa). Fe cation-binding residues include His301, Asp303, and His358. Arg369 is a binding site for 2-oxoglutarate.

The protein belongs to the iron/ascorbate-dependent oxidoreductase family. Requires Fe(2+) as cofactor.

2-oxoglutarate-dependent dioxygenase involved in glucosinolates biosynthesis. Catalyzes the conversion of methylsulfinylalkyl glucosinolates to alkenyl glucosinolates. This Arabidopsis thaliana (Mouse-ear cress) protein is 2-oxoglutarate-dependent dioxygenase AOP2 (AOP2).